Consider the following 222-residue polypeptide: Uracil-DNA glycosylase (222 aa).

Aspartate 61 serves as the catalytic Proton acceptor.

Belongs to the uracil-DNA glycosylase (UDG) superfamily. UNG family.

It is found in the cytoplasm. It carries out the reaction Hydrolyzes single-stranded DNA or mismatched double-stranded DNA and polynucleotides, releasing free uracil.. Functionally, excises uracil residues from the DNA which can arise as a result of misincorporation of dUMP residues by DNA polymerase or due to deamination of cytosine. In Aeromonas salmonicida (strain A449), this protein is Uracil-DNA glycosylase.